The sequence spans 138 residues: Large ribosomal subunit protein uL16 (138 aa).

The span at Met-1–Gly-15 shows a compositional bias: basic residues. The disordered stretch occupies residues Met-1–Ala-21.

It belongs to the universal ribosomal protein uL16 family. In terms of assembly, part of the 50S ribosomal subunit.

In terms of biological role, binds 23S rRNA and is also seen to make contacts with the A and possibly P site tRNAs. The sequence is that of Large ribosomal subunit protein uL16 from Borrelia garinii subsp. bavariensis (strain ATCC BAA-2496 / DSM 23469 / PBi) (Borreliella bavariensis).